Consider the following 350-residue polypeptide: Biotin synthase (350 aa).

The 220-residue stretch at 38–257 (NKVQVSTLLS…AVARIIMPMS (220 aa)) folds into the Radical SAM core domain. [4Fe-4S] cluster-binding residues include C53, C57, and C60. [2Fe-2S] cluster contacts are provided by C97, C128, C188, and R260.

It belongs to the radical SAM superfamily. Biotin synthase family. In terms of assembly, homodimer. It depends on [4Fe-4S] cluster as a cofactor. [2Fe-2S] cluster is required as a cofactor.

The enzyme catalyses (4R,5S)-dethiobiotin + (sulfur carrier)-SH + 2 reduced [2Fe-2S]-[ferredoxin] + 2 S-adenosyl-L-methionine = (sulfur carrier)-H + biotin + 2 5'-deoxyadenosine + 2 L-methionine + 2 oxidized [2Fe-2S]-[ferredoxin]. Its pathway is cofactor biosynthesis; biotin biosynthesis; biotin from 7,8-diaminononanoate: step 2/2. Its function is as follows. Catalyzes the conversion of dethiobiotin (DTB) to biotin by the insertion of a sulfur atom into dethiobiotin via a radical-based mechanism. The chain is Biotin synthase from Photobacterium profundum (strain SS9).